The chain runs to 1142 residues: Nucleoporin nup131 (1142 aa).

This sequence belongs to the nucleoporin Nup133 family. In terms of assembly, component of the npc107-120 complex which consists of nup85, nup107, nup120, nup131, nup132 and seh1. Interacts with nup107.

Its subcellular location is the nucleus. Functions as a component of the nuclear pore complex (NPC). NPC components, collectively referred to as nucleoporins (NUPs), can play the role of both NPC structural components and of docking or interaction partners for transiently associated nuclear transport factors. Active directional transport is assured by both, a Phe-Gly (FG) repeat affinity gradient for these transport factors across the NPC and a transport cofactor concentration gradient across the nuclear envelope. This is Nucleoporin nup131 (nup131) from Schizosaccharomyces pombe (strain 972 / ATCC 24843) (Fission yeast).